A 493-amino-acid chain; its full sequence is Mitochondrial distribution and morphology protein 10 (493 aa).

Belongs to the MDM10 family. Component of the ER-mitochondria encounter structure (ERMES) or MDM complex, composed of MMM1, MDM10, MDM12 and MDM34. Associates with the mitochondrial outer membrane sorting assembly machinery SAM(core) complex, which consists of SAM35, SAM37 and SAM50, to form a SAM(holo) complex.

The protein localises to the mitochondrion outer membrane. Its function is as follows. Component of the ERMES/MDM complex, which serves as a molecular tether to connect the endoplasmic reticulum and mitochondria. Components of this complex are involved in the control of mitochondrial shape and protein biogenesis and may function in phospholipid exchange. MDM10 is involved in the late assembly steps of the general translocase of the mitochondrial outer membrane (TOM complex). Functions in the TOM40-specific route of the assembly of outer membrane beta-barrel proteins, including the association of TOM40 with the receptor TOM22 and small TOM proteins. Can associate with the SAM(core) complex as well as the MDM12-MMM1 complex, both involved in late steps of the major beta-barrel assembly pathway, that is responsible for biogenesis of all outer membrane beta-barrel proteins. May act as a switch that shuttles between both complexes and channels precursor proteins into the TOM40-specific pathway. Plays a role in mitochondrial morphology and in the inheritance of mitochondria. This chain is Mitochondrial distribution and morphology protein 10, found in Saccharomyces cerevisiae (strain RM11-1a) (Baker's yeast).